Reading from the N-terminus, the 538-residue chain is Putative cysteine ligase BshC (538 aa).

A coiled-coil region spans residues 248–268 (ISKYKEVQEGLRNQQEVIKEL).

Belongs to the BshC family.

In terms of biological role, involved in bacillithiol (BSH) biosynthesis. May catalyze the last step of the pathway, the addition of cysteine to glucosamine malate (GlcN-Mal) to generate BSH. This is Putative cysteine ligase BshC from Bacillus cereus (strain B4264).